The primary structure comprises 484 residues: Aspartyl/glutamyl-tRNA(Asn/Gln) amidotransferase subunit B (484 aa).

The protein belongs to the GatB/GatE family. GatB subfamily. As to quaternary structure, heterotrimer of A, B and C subunits.

The enzyme catalyses L-glutamyl-tRNA(Gln) + L-glutamine + ATP + H2O = L-glutaminyl-tRNA(Gln) + L-glutamate + ADP + phosphate + H(+). It catalyses the reaction L-aspartyl-tRNA(Asn) + L-glutamine + ATP + H2O = L-asparaginyl-tRNA(Asn) + L-glutamate + ADP + phosphate + 2 H(+). In terms of biological role, allows the formation of correctly charged Asn-tRNA(Asn) or Gln-tRNA(Gln) through the transamidation of misacylated Asp-tRNA(Asn) or Glu-tRNA(Gln) in organisms which lack either or both of asparaginyl-tRNA or glutaminyl-tRNA synthetases. The reaction takes place in the presence of glutamine and ATP through an activated phospho-Asp-tRNA(Asn) or phospho-Glu-tRNA(Gln). This is Aspartyl/glutamyl-tRNA(Asn/Gln) amidotransferase subunit B from Bordetella pertussis (strain Tohama I / ATCC BAA-589 / NCTC 13251).